Consider the following 254-residue polypeptide: tRNA (guanine-N(1)-)-methyltransferase (254 aa).

S-adenosyl-L-methionine-binding positions include G114 and 134 to 139; that span reads IGDYVL.

Belongs to the RNA methyltransferase TrmD family. Homodimer.

Its subcellular location is the cytoplasm. It catalyses the reaction guanosine(37) in tRNA + S-adenosyl-L-methionine = N(1)-methylguanosine(37) in tRNA + S-adenosyl-L-homocysteine + H(+). Its function is as follows. Specifically methylates guanosine-37 in various tRNAs. This is tRNA (guanine-N(1)-)-methyltransferase from Desulforamulus reducens (strain ATCC BAA-1160 / DSM 100696 / MI-1) (Desulfotomaculum reducens).